A 352-amino-acid polypeptide reads, in one-letter code: Probable cytosolic iron-sulfur protein assembly protein CIAO1 homolog (352 aa).

WD repeat units follow at residues 14–53, 63–102, 107–146, 152–191, 200–240, 268–306, and 319–352; these read GHDD…PSEQ, CHTR…WEQV, GHEN…EFEC, GHSQ…WGCA, GHES…TSTP, HHRR…LTQP, and AHGA…WWLR.

It belongs to the WD repeat CIA1 family.

Essential component of the cytosolic iron-sulfur (Fe/S) protein assembly machinery. Required for the maturation of extramitochondrial Fe/S proteins. This chain is Probable cytosolic iron-sulfur protein assembly protein CIAO1 homolog, found in Chlamydomonas reinhardtii (Chlamydomonas smithii).